The chain runs to 231 residues: NADH-ubiquinone oxidoreductase chain 4 (231 aa).

6 helical membrane passes run 1–21, 34–54, 63–85, 89–111, 128–148, and 169–189; these read PIAG…YGII, MFLP…LTCL, IAYS…TPWG, ALAL…NTTY, ILPM…AIPP, and TIIM…HMFL.

It belongs to the complex I subunit 4 family.

It localises to the mitochondrion membrane. The enzyme catalyses a ubiquinone + NADH + 5 H(+)(in) = a ubiquinol + NAD(+) + 4 H(+)(out). In terms of biological role, core subunit of the mitochondrial membrane respiratory chain NADH dehydrogenase (Complex I) that is believed to belong to the minimal assembly required for catalysis. Complex I functions in the transfer of electrons from NADH to the respiratory chain. The immediate electron acceptor for the enzyme is believed to be ubiquinone. In Bothrocophias hyoprora (Amazonian hognose viper), this protein is NADH-ubiquinone oxidoreductase chain 4 (MT-ND4).